Here is a 611-residue protein sequence, read N- to C-terminus: L-tyrosine decarboxylase (611 aa).

Residues 151-152 (GS), T292, and 382-384 (DPH) each bind pyridoxal 5'-phosphate. N6-(pyridoxal phosphate)lysine is present on K385. Y413 (proton donor) is an active-site residue. S433 provides a ligand contact to pyridoxal 5'-phosphate.

It belongs to the group II decarboxylase family. Tyrosine decarboxylase subfamily. Homodimer. Pyridoxal 5'-phosphate serves as cofactor.

It carries out the reaction L-tyrosine + H(+) = tyramine + CO2. The enzyme catalyses L-dopa + H(+) = dopamine + CO2. It functions in the pathway amino-acid metabolism. Levodopa decarboxylation is not inhibited by carbidopa, benserazide, and methyldopa, that are three human L-dopa decarboxylase inhibitors. Its function is as follows. Catalyzes the decarboxylation of L-tyrosine to produce tyramine. Plays a role in acid resistance since tyramine production via tyrosine decarboxylation appears to provide a cytosolic pH maintenance mechanism that helps the bacterium cope with acid stress such as that encountered in gastrointestinal tract (GIT) environments. Therefore, may contribute to the colonization of the human GIT by E.faecium. Also involved in drug metabolism, being able to catalyze decarboxylation of levodopa (L-dopa) to dopamine. In gut microbiota this enzyme is in fact exclusively responsible for the decarboxylation of levodopa, and thus reduces in situ levels of levodopa in the treatment of Parkinson's disease. It was shown that abundance of bacterial tyrosine decarboxylase in the proximal small intestine - the primary site of levodopa absorption - contributes to interindividual variation in drug efficacy and can explain the requirement for an increased dosage regimen of levodopa treatment in Parkinson's disease patients. The protein is L-tyrosine decarboxylase of Enterococcus faecium (Streptococcus faecium).